Consider the following 360-residue polypeptide: Nucleoporin SEH1-A (360 aa).

6 WD repeats span residues 10-49 (DHKD…NWHC), 55-96 (THSG…SNDK), 111-152 (DSRT…NLSQ), 160-210 (SCKL…RKYA), 217-258 (SVSD…KELS), and 276-315 (NHNS…NWKC).

It belongs to the WD repeat SEC13 family. In terms of assembly, component of the Nup107-160 subcomplex of the nuclear pore complex (NPC). The Nup107-160 subcomplex includes NUP160, NUP133, NUP107, NUP98, NUP85, NUP43, NUP37, SEH1 and SEC13. Component of the GATOR2 subcomplex, composed of MIOS, SEC13, SEH1L, WDR24 and WDR59. The GATOR2 complex interacts with CASTOR1 and CASTOR2; the interaction is negatively regulated by arginine. The GATOR2 complex interacts with SESN1, SESN2 and SESN3; the interaction is negatively regulated by amino acids.

The protein resides in the chromosome. The protein localises to the centromere. It is found in the kinetochore. Its subcellular location is the nucleus. It localises to the nuclear pore complex. The protein resides in the lysosome membrane. Its activity is regulated as follows. The GATOR2 complex is negatively regulated by the upstream amino acid sensors CASTOR1 and SESN2, which sequester the GATOR2 complex in absence of amino acids. In the presence of abundant amino acids, GATOR2 is released from CASTOR1 and SESN2 and activated. Functionally, component of the Nup107-160 subcomplex of the nuclear pore complex (NPC). The Nup107-160 subcomplex is required for the assembly of a functional NPC. The Nup107-160 subcomplex is also required for normal kinetochore microtubule attachment, mitotic progression and chromosome segregation. This subunit plays a role in recruitment of the Nup107-160 subcomplex to the kinetochore. As a component of the GATOR2 complex, functions as an activator of the amino acid-sensing branch of the mTORC1 signaling pathway. The GATOR2 complex indirectly activates mTORC1 through the inhibition of the GATOR1 subcomplex. GATOR2 probably acts as an E3 ubiquitin-protein ligase toward GATOR1. In the presence of abundant amino acids, the GATOR2 complex mediates ubiquitination of the NPRL2 core component of the GATOR1 complex, leading to GATOR1 inactivation. In the absence of amino acids, GATOR2 is inhibited, activating the GATOR1 complex. This chain is Nucleoporin SEH1-A (seh1l-a), found in Xenopus laevis (African clawed frog).